Reading from the N-terminus, the 160-residue chain is 6,7-dimethyl-8-ribityllumazine synthase (160 aa).

5-amino-6-(D-ribitylamino)uracil is bound by residues phenylalanine 28, 62-64 (ALE), and 86-88 (AVI). Position 91-92 (91-92 (ET)) interacts with (2S)-2-hydroxy-3-oxobutyl phosphate. The active-site Proton donor is histidine 94. Asparagine 119 lines the 5-amino-6-(D-ribitylamino)uracil pocket. A (2S)-2-hydroxy-3-oxobutyl phosphate-binding site is contributed by arginine 133.

It belongs to the DMRL synthase family.

The catalysed reaction is (2S)-2-hydroxy-3-oxobutyl phosphate + 5-amino-6-(D-ribitylamino)uracil = 6,7-dimethyl-8-(1-D-ribityl)lumazine + phosphate + 2 H2O + H(+). It functions in the pathway cofactor biosynthesis; riboflavin biosynthesis; riboflavin from 2-hydroxy-3-oxobutyl phosphate and 5-amino-6-(D-ribitylamino)uracil: step 1/2. In terms of biological role, catalyzes the formation of 6,7-dimethyl-8-ribityllumazine by condensation of 5-amino-6-(D-ribitylamino)uracil with 3,4-dihydroxy-2-butanone 4-phosphate. This is the penultimate step in the biosynthesis of riboflavin. This Nitrosospira multiformis (strain ATCC 25196 / NCIMB 11849 / C 71) protein is 6,7-dimethyl-8-ribityllumazine synthase.